Reading from the N-terminus, the 286-residue chain is Merozoite surface protein 2 (286 aa).

The N-terminal stretch at 1-20 is a signal peptide; it reads MKVIKTLSIINFFIFVTFNI. Residues Asn22 and Asn36 are each glycosylated (N-linked (GlcNAc...) asparagine). The segment at 43-248 is disordered; the sequence is MTESKTPTPT…SQKECTDGNK (206 aa). Residues 44–212 form a polymorphic region region; sequence TESKTPTPTG…EQTESPELQS (169 aa). Residues 54–68 are compositionally biased toward gly residues; it reads AGAGASGSAGSGDGA. The stretch at 59 to 68 is repeat 1; that stretch reads SGSAGSGDGA. The segment at 59-106 is 5 X 10 AA tandem repeats of S-G-S-A-[GS]-[GS]-[AD]-G-A; sequence SGSAGSGDGASGSASGSASGSASGSAGASGSASGSAGASGSASGSAGA. Residues 69-76 form a 2; partial repeat; it reads SGSASGSA. Residues 69–137 show a composition bias toward low complexity; the sequence is SGSASGSASG…STSTSSENPN (69 aa). 3 repeat units span residues 77-86, 88-96, and 97-106. Composition is skewed to polar residues over residues 153–179 and 186–214; these read KPNQ…NVPP and KSPT…QSAP. Asn163 is a glycosylation site (N-linked (GlcNAc...) asparagine). Asn235 carries an N-linked (GlcNAc...) asparagine glycan. Basic and acidic residues predominate over residues 239–248; sequence SQKECTDGNK. Residues Cys243 and Cys251 are joined by a disulfide bond. Asn259 and Asn260 each carry an N-linked (GlcNAc...) asparagine glycan. Asn260 is lipidated: GPI-anchor amidated asparagine. Residues 261–286 constitute a propeptide, removed in mature form; sequence SSNIASINKFVVLISATLVLSFAIFI.

Its subcellular location is the cell membrane. In terms of biological role, may play a role in the merozoite attachment to the erythrocyte. This is Merozoite surface protein 2 from Plasmodium falciparum (isolate 311).